The sequence spans 199 residues: Probable thymidylate kinase (199 aa).

7-14 (GLDGSGKT) provides a ligand contact to ATP.

The protein belongs to the thymidylate kinase family.

It catalyses the reaction dTMP + ATP = dTDP + ADP. This chain is Probable thymidylate kinase, found in Halobacterium salinarum (strain ATCC 29341 / DSM 671 / R1).